A 162-amino-acid chain; its full sequence is UPF0460 protein y4vQ (162 aa).

The protein belongs to the UPF0460 family.

The protein is UPF0460 protein y4vQ of Sinorhizobium fredii (strain NBRC 101917 / NGR234).